Here is a 498-residue protein sequence, read N- to C-terminus: ATP synthase subunit beta, chloroplastic (498 aa).

172–179 (GGAGVGKT) lines the ATP pocket.

Belongs to the ATPase alpha/beta chains family. F-type ATPases have 2 components, CF(1) - the catalytic core - and CF(0) - the membrane proton channel. CF(1) has five subunits: alpha(3), beta(3), gamma(1), delta(1), epsilon(1). CF(0) has four main subunits: a(1), b(1), b'(1) and c(9-12).

Its subcellular location is the plastid. The protein localises to the chloroplast thylakoid membrane. It catalyses the reaction ATP + H2O + 4 H(+)(in) = ADP + phosphate + 5 H(+)(out). Its function is as follows. Produces ATP from ADP in the presence of a proton gradient across the membrane. The catalytic sites are hosted primarily by the beta subunits. This Galbulimima belgraveana (Northern pigeonberry ash) protein is ATP synthase subunit beta, chloroplastic.